The primary structure comprises 471 residues: MHPGVLAAFLFLSWTHCRALPLPSGGDEDDLSEEDLQFAERYLRSYYHPTNLAGILKENAASSMTERLREMQSFFGLEVTGKLDDNTLDVMKKPRCGVPDVGEYNVFPRTLKWSKMNLTYRIVNYTPDMTHSEVEKAFKKAFKVWSDVTPLNFTRLHDGIADIMISFGIKEHGDFYPFDGPSGLLAHAFPPGPNYGGDAHFDDDETWTSSSKGYNLFLVAAHEFGHSLGLDHSKDPGALMFPIYTYTGKSHFMLPDDDVQGIQSLYGPGDEDPNPKHPKTPDKCDPSLSLDAITSLRGETMIFKDRFFWRLHPQQVDAELFLTKSFWPELPNRIDAAYEHPSHDLIFIFRGRKFWALNGYDILEGYPKKISELGLPKEVKKISAAVHFEDTGKTLLFSGNQVWRYDDTNHIMDKDYPRLIEEDFPGIGDKVDAVYEKNGYIYFFNGPIQFEYSIWSNRIVRVMPANSILWC.

The first 19 residues, 1–19 (MHPGVLAAFLFLSWTHCRA), serve as a signal peptide directing secretion. Positions 20–103 (LPLPSGGDED…PRCGVPDVGE (84 aa)) are cleaved as a propeptide — activation peptide. A Cysteine switch motif is present at residues 94–101 (PRCGVPDV). Position 96 (cysteine 96) interacts with Zn(2+). N-linked (GlcNAc...) asparagine glycosylation occurs at asparagine 117. Residue aspartate 128 coordinates Ca(2+). An N-linked (GlcNAc...) asparagine glycan is attached at asparagine 152. Aspartate 162 contacts Ca(2+). Positions 172 and 174 each coordinate Zn(2+). The interaction with TIMP2 stretch occupies residues 176 to 246 (YPFDGPSGLL…GALMFPIYTY (71 aa)). Ca(2+)-binding residues include aspartate 179, glycine 180, serine 182, and leucine 184. Residue histidine 187 coordinates Zn(2+). Residues asparagine 194, glycine 196, and aspartate 198 each contribute to the Ca(2+) site. Histidine 200 is a binding site for Zn(2+). Aspartate 202, aspartate 203, and glutamate 205 together coordinate Ca(2+). Histidine 222 is a binding site for Zn(2+). Residue glutamate 223 is part of the active site. Histidine 226, histidine 232, and methionine 240 together coordinate Zn(2+). The tract at residues 263–284 (QSLYGPGDEDPNPKHPKTPDKC) is disordered. Residues 268 to 471 (PGDEDPNPKH…VMPANSILWC (204 aa)) form an interaction with collagen region. A compositionally biased stretch (basic and acidic residues) spans 273–284 (PNPKHPKTPDKC). Hemopexin repeat units lie at residues 281–330 (PDKC…WPEL), 331–377 (PNRI…GLPK), 379–427 (VKKI…FPGI), and 428–471 (GDKV…ILWC). An intrachain disulfide couples cysteine 284 to cysteine 471. The Ca(2+) site is built by aspartate 291, isoleucine 293, aspartate 335, and alanine 337. The residue at position 366 (tyrosine 366) is a Phosphotyrosine; by PKDCC. The Ca(2+) site is built by serine 383, alanine 385, aspartate 432, and valine 434.

It belongs to the peptidase M10A family. As to quaternary structure, monomer. Interacts with TIMP1, TIMP2 and TIMP3. Binds (via the C-terminal region) to collagen. The cofactor is Ca(2+). Zn(2+) serves as cofactor. Post-translationally, the proenzyme is activated by removal of the propeptide; this cleavage can be effected by other matrix metalloproteinases, such as MMP2, MMP3 and MMP14 and may involve several cleavage steps. Cleavage can also be autocatalytic, after partial maturation by another protease or after treatment with 4-aminophenylmercuric acetate (APMA) (in vitro). In terms of processing, N-glycosylated. Tyrosine phosphorylated by PKDCC/VLK. Detected in fetal cartilage and calvaria, in chondrocytes of hypertrophic cartilage in vertebrae and in the dorsal end of ribs undergoing ossification, as well as in osteoblasts and periosteal cells below the inner periosteal region of ossified ribs. Detected in chondrocytes from in joint cartilage that have been treated with TNF and IL1B, but not in untreated chondrocytes. Detected in T lymphocytes. Detected in breast carcinoma tissue.

The protein resides in the secreted. The protein localises to the extracellular space. It is found in the extracellular matrix. Its activity is regulated as follows. Inhibited by TIMP1, TIMP2 and TIMP3. Inhibited by acetohydroxamic acid and other zinc chelators. Plays a role in the degradation of extracellular matrix proteins including fibrillar collagen, fibronectin, TNC and ACAN. Cleaves triple helical collagens, including type I, type II and type III collagen, but has the highest activity with soluble type II collagen. Can also degrade collagen type IV, type XIV and type X. May also function by activating or degrading key regulatory proteins, such as TGFB1 and CCN2. Plays a role in wound healing, tissue remodeling, cartilage degradation, bone development, bone mineralization and ossification. Required for normal embryonic bone development and ossification. Plays a role in the healing of bone fractures via endochondral ossification. Plays a role in wound healing, probably by a mechanism that involves proteolytic activation of TGFB1 and degradation of CCN2. Plays a role in keratinocyte migration during wound healing. May play a role in cell migration and in tumor cell invasion. In Homo sapiens (Human), this protein is Collagenase 3 (MMP13).